The primary structure comprises 746 residues: NAD(P)H-quinone oxidoreductase subunit 5, chloroplastic (746 aa).

Transmembrane regions (helical) follow at residues 9–29 (WIIP…LLLF), 40–60 (WAFP…DLSI), 89–109 (IDSL…LVLI), 121–140 (YLRF…GLVT), 147–167 (VYIF…FWFT), 185–205 (GDFG…SLEF), 219–239 (NEVN…GSVA), 258–278 (TPIS…FLVA), 280–300 (LLPL…IGII), 327–347 (LGYM…FHLI), 354–374 (ALLF…VGYS), 396–416 (MSFL…CFWS), 425–445 (WLYS…TAFY), 552–572 (LFSM…GISF), 606–626 (FFIN…IASF), and 726–746 (SYIF…YLFP).

Belongs to the complex I subunit 5 family. In terms of assembly, NDH is composed of at least 16 different subunits, 5 of which are encoded in the nucleus.

It localises to the plastid. The protein resides in the chloroplast thylakoid membrane. It carries out the reaction a plastoquinone + NADH + (n+1) H(+)(in) = a plastoquinol + NAD(+) + n H(+)(out). The catalysed reaction is a plastoquinone + NADPH + (n+1) H(+)(in) = a plastoquinol + NADP(+) + n H(+)(out). NDH shuttles electrons from NAD(P)H:plastoquinone, via FMN and iron-sulfur (Fe-S) centers, to quinones in the photosynthetic chain and possibly in a chloroplast respiratory chain. The immediate electron acceptor for the enzyme in this species is believed to be plastoquinone. Couples the redox reaction to proton translocation, and thus conserves the redox energy in a proton gradient. This chain is NAD(P)H-quinone oxidoreductase subunit 5, chloroplastic (ndhF), found in Vicia faba (Broad bean).